The sequence spans 325 residues: GMP reductase (325 aa).

Cys-174 functions as the Thioimidate intermediate in the catalytic mechanism. An NADP(+)-binding site is contributed by 203–226 (MIADGGIRTHGDIAKSIRFGASMV).

Belongs to the IMPDH/GMPR family. GuaC type 2 subfamily.

It carries out the reaction IMP + NH4(+) + NADP(+) = GMP + NADPH + 2 H(+). In terms of biological role, catalyzes the irreversible NADPH-dependent deamination of GMP to IMP. It functions in the conversion of nucleobase, nucleoside and nucleotide derivatives of G to A nucleotides, and in maintaining the intracellular balance of A and G nucleotides. In Staphylococcus carnosus (strain TM300), this protein is GMP reductase.